The following is a 331-amino-acid chain: Aromatic 2-oxoacid reductase (331 aa).

NAD(+)-binding positions include 154-155 (RI), D175, 205-206 (AP), N211, 232-234 (AAR), and D258. R234 is an active-site residue. Residue E263 is part of the active site. H295 acts as the Proton donor in catalysis.

This sequence belongs to the D-isomer specific 2-hydroxyacid dehydrogenase family.

The enzyme catalyses (R)-3-phenyllactate + NAD(+) = 3-phenylpyruvate + NADH + H(+). It catalyses the reaction (2R)-2-hydroxy-3-(4-hydroxyphenyl)propanoate + NAD(+) = 3-(4-hydroxyphenyl)pyruvate + NADH + H(+). It carries out the reaction 3-(indol-3-yl)lactate + NAD(+) = indole-3-pyruvate + NADH + H(+). Its pathway is amino-acid degradation. Its function is as follows. Essential for the reductive metabolism of L-phenylalanine, L-tyrosine and L-tryptophan. Catalyzes the conversion of phenylpyruvic acid to phenyllactic acid, 4-hydroxy-phenylpyruvic acid to 4-hydroxy-phenyllactic acid, and indolepyruvic acid to indolelactic acid. The polypeptide is Aromatic 2-oxoacid reductase (Clostridium sporogenes (strain ATCC 15579)).